Reading from the N-terminus, the 120-residue chain is Spermidine export protein MdtJ (120 aa).

The next 4 helical transmembrane spans lie at methionine 1 to methionine 21, alanine 31 to valine 51, isoleucine 54 to phenylalanine 74, and glutamate 81 to isoleucine 101.

It belongs to the drug/metabolite transporter (DMT) superfamily. Small multidrug resistance (SMR) (TC 2.A.7.1) family. MdtJ subfamily. In terms of assembly, forms a complex with MdtI.

Its subcellular location is the cell inner membrane. Functionally, catalyzes the excretion of spermidine. This chain is Spermidine export protein MdtJ, found in Salmonella agona (strain SL483).